Here is a 61-residue protein sequence, read N- to C-terminus: Cobrotoxin-b (61 aa).

4 disulfides stabilise this stretch: Cys-3/Cys-23, Cys-17/Cys-40, Cys-42/Cys-53, and Cys-54/Cys-59.

This sequence belongs to the three-finger toxin family. Short-chain subfamily. Type I alpha-neurotoxin sub-subfamily. In terms of tissue distribution, expressed by the venom gland.

The protein localises to the secreted. In terms of biological role, produces peripheral paralysis by blocking neuromuscular transmission at the postsynaptic site. Binds to the nicotinic acetylcholine receptor. This chain is Cobrotoxin-b, found in Naja kaouthia (Monocled cobra).